Reading from the N-terminus, the 520-residue chain is Peptide chain release factor 3 (520 aa).

One can recognise a tr-type G domain in the interval 8–277; the sequence is ESRKTFAIIS…HAPMPNARQT (270 aa). GTP is bound by residues 17 to 24, 85 to 89, and 139 to 142; these read SHPDAGKT, DTPGH, and NKLD.

This sequence belongs to the TRAFAC class translation factor GTPase superfamily. Classic translation factor GTPase family. PrfC subfamily.

Its subcellular location is the cytoplasm. Its function is as follows. Increases the formation of ribosomal termination complexes and stimulates activities of RF-1 and RF-2. It binds guanine nucleotides and has strong preference for UGA stop codons. It may interact directly with the ribosome. The stimulation of RF-1 and RF-2 is significantly reduced by GTP and GDP, but not by GMP. The sequence is that of Peptide chain release factor 3 from Staphylococcus saprophyticus subsp. saprophyticus (strain ATCC 15305 / DSM 20229 / NCIMB 8711 / NCTC 7292 / S-41).